The following is a 101-amino-acid chain: Urease subunit beta (101 aa).

It belongs to the urease beta subunit family. Heterotrimer of UreA (gamma), UreB (beta) and UreC (alpha) subunits. Three heterotrimers associate to form the active enzyme.

The protein localises to the cytoplasm. The catalysed reaction is urea + 2 H2O + H(+) = hydrogencarbonate + 2 NH4(+). Its pathway is nitrogen metabolism; urea degradation; CO(2) and NH(3) from urea (urease route): step 1/1. The polypeptide is Urease subunit beta (Burkholderia ambifaria (strain ATCC BAA-244 / DSM 16087 / CCUG 44356 / LMG 19182 / AMMD) (Burkholderia cepacia (strain AMMD))).